Consider the following 551-residue polypeptide: Trehalose-6-phosphate hydrolase (551 aa).

Asp200 (nucleophile) is an active-site residue. Glu251 serves as the catalytic Proton donor.

This sequence belongs to the glycosyl hydrolase 13 family.

Its subcellular location is the cytoplasm. It carries out the reaction alpha,alpha-trehalose 6-phosphate + H2O = D-glucose 6-phosphate + D-glucose. Its function is as follows. Hydrolyzes trehalose-6-phosphate to glucose and glucose 6-phosphate. Can also very effectively hydrolyze p-nitrophenyl-alpha-D-glucopyranoside, but it does not recognize trehalose, sucrose, maltose, isomaltose, or maltodextrins. The polypeptide is Trehalose-6-phosphate hydrolase (treC) (Escherichia coli (strain K12)).